The sequence spans 374 residues: Pectate lyase 1 (374 aa).

Residues 1–21 (MDSPCLVALLVFSFVIGSCFS) form the signal peptide. 2 disulfides stabilise this stretch: Cys-28-Cys-45 and Cys-128-Cys-147. N-linked (GlcNAc...) asparagine glycosylation is present at Asn-158. Residue Asp-170 participates in Ca(2+) binding. N-linked (GlcNAc...) (complex) asparagine glycosylation is present at Asn-191. Residues Asp-194 and Asp-198 each coordinate Ca(2+). Residue Arg-250 is part of the active site. Asn-293 is a glycosylation site (N-linked (GlcNAc...) asparagine). Cys-306 and Cys-312 are joined by a disulfide. An N-linked (GlcNAc...) (complex) asparagine glycan is attached at Asn-354.

The protein belongs to the polysaccharide lyase 1 family. Amb a subfamily. It depends on Ca(2+) as a cofactor. N-glycosylated; contains fucose and xylose.

The enzyme catalyses Eliminative cleavage of (1-&gt;4)-alpha-D-galacturonan to give oligosaccharides with 4-deoxy-alpha-D-galact-4-enuronosyl groups at their non-reducing ends.. It participates in glycan metabolism; pectin degradation; 2-dehydro-3-deoxy-D-gluconate from pectin: step 2/5. Functionally, has pectate lyase activity. This is Pectate lyase 1 from Cryptomeria japonica (Japanese cedar).